The sequence spans 523 residues: Cryptochrome DASH (523 aa).

One can recognise a Photolyase/cryptochrome alpha/beta domain in the interval 6–142 (RVIICLLRND…KYQTFWGSTL (137 aa)). Disordered stretches follow at residues 174–211 (RPTFQMPDKLKPLPSGLEEGSVPSHEDFDQQDPLTDPR) and 486–523 (KPAGSWEKSARRGKGPSHTPKQHKNRGIDFYFSRNKDV). Basic residues predominate over residues 496–510 (RRGKGPSHTPKQHKN).

It belongs to the DNA photolyase class-1 family. It depends on FAD as a cofactor. (6R)-5,10-methylene-5,6,7,8-tetrahydrofolate is required as a cofactor.

Its function is as follows. May have a photoreceptor function. Has weak cyclobutyl pyrimidine photolyase activity when expressed in E.coli and when tested in vitro. This is Cryptochrome DASH (cry-dash) from Xenopus laevis (African clawed frog).